A 545-amino-acid polypeptide reads, in one-letter code: Adenine deaminase (545 aa).

The protein belongs to the metallo-dependent hydrolases superfamily. Adenine deaminase family. It depends on Mn(2+) as a cofactor.

The catalysed reaction is adenine + H2O + H(+) = hypoxanthine + NH4(+). This is Adenine deaminase from Salinibacter ruber (strain DSM 13855 / M31).